Consider the following 790-residue polypeptide: Serine/threonine-protein kinase DCLK3 (790 aa).

The segment at 1–37 is disordered; it reads MPAAPVLRPPPPPATPAPPAPSRPAPPIPGHRGPCDH. A compositionally biased stretch (pro residues) spans 7 to 29; that stretch reads LRPPPPPATPAPPAPSRPAPPIP. A Doublecortin domain is found at 97–183; the sequence is RVVTVVKLGG…KEPLTLKSIQ (87 aa). Low complexity predominate over residues 201 to 218; it reads HSRVPSPRLRSRLPSKLL. 2 disordered regions span residues 201–290 and 315–506; these read HSRV…SGEK and LQLG…KGII. 4 stretches are compositionally biased toward basic and acidic residues: residues 332–345, 352–400, 425–434, and 457–496; these read DLGR…EKLV, RPSE…ESQD, IDMRREDRHT, and TRGE…ERPS. One can recognise a Protein kinase domain in the interval 514–771; it reads YDIGGVIGDG…AEQVLQHPWI (258 aa). Residues 520–528 and Lys543 contribute to the ATP site; that span reads IGDGNFATV. Asp635 acts as the Proton acceptor in catalysis.

Belongs to the protein kinase superfamily. CAMK Ser/Thr protein kinase family. CaMK subfamily. Highly expressed in brain and to a lower extent in liver and kidney.

Its subcellular location is the cytoplasm. The protein resides in the nucleus. The enzyme catalyses L-seryl-[protein] + ATP = O-phospho-L-seryl-[protein] + ADP + H(+). It carries out the reaction L-threonyl-[protein] + ATP = O-phospho-L-threonyl-[protein] + ADP + H(+). In Mus musculus (Mouse), this protein is Serine/threonine-protein kinase DCLK3 (Dclk3).